A 101-amino-acid chain; its full sequence is uncharacterized protein (101 aa).

Helical transmembrane passes span 20–40, 59–79, and 81–101; these read KHFI…LLGL, GVIA…MYIA, and SEMW…ALFF.

The protein localises to the endoplasmic reticulum. It is found in the membrane. This is an uncharacterized protein from Saccharomyces cerevisiae (strain ATCC 204508 / S288c) (Baker's yeast).